The primary structure comprises 33 residues: Dermaseptin-H8 (33 aa).

Leu33 is subject to Leucine amide.

Expressed by the skin glands.

It localises to the secreted. Has antimicrobial activity. In Pithecopus hypochondrialis (Orange-legged leaf frog), this protein is Dermaseptin-H8.